The sequence spans 250 residues: Probable cytokinin riboside 5'-monophosphate phosphoribohydrolase LOGL6 (250 aa).

Residues E98, 116-117 (RK), and 133-139 (GYGTLEE) each bind substrate.

It belongs to the LOG family. In terms of tissue distribution, expressed in roots, leaves, stems, tiller buds, shoot apex, immature inflorescences and flowers.

The enzyme catalyses N(6)-(dimethylallyl)adenosine 5'-phosphate + H2O = N(6)-dimethylallyladenine + D-ribose 5-phosphate. The catalysed reaction is 9-ribosyl-trans-zeatin 5'-phosphate + H2O = trans-zeatin + D-ribose 5-phosphate. Its function is as follows. Cytokinin-activating enzyme working in the direct activation pathway. Phosphoribohydrolase that converts inactive cytokinin nucleotides to the biologically active free-base forms. This Oryza sativa subsp. japonica (Rice) protein is Probable cytokinin riboside 5'-monophosphate phosphoribohydrolase LOGL6 (LOGL6).